The sequence spans 450 residues: Probable glucan endo-1,3-beta-glucosidase eglC (450 aa).

The first 18 residues, 1–18, serve as a signal peptide directing secretion; that stretch reads MQFTHLVALALALATSEA. Catalysis depends on Glu-128, which acts as the Proton donor. Residue Asn-183 is glycosylated (N-linked (GlcNAc...) asparagine). Glu-239 serves as the catalytic Nucleophile. N-linked (GlcNAc...) asparagine glycans are attached at residues Asn-362 and Asn-368. 2 stretches are compositionally biased toward low complexity: residues 377–395 and 405–420; these read SSAISGSSSGSAAGSSGSS and ASGQSSSSTGSSSAPS. The interval 377–420 is disordered; that stretch reads SSAISGSSSGSAAGSSGSSGSSGSGASGASGQSSSSTGSSSAPS. Asn-427 carries GPI-anchor amidated asparagine lipidation. A propeptide spans 428–450 (removed in mature form); the sequence is AASGLSGSICGAVVAVCLALAAL.

This sequence belongs to the glycosyl hydrolase 17 family. Post-translationally, the GPI-anchor is attached to the protein in the endoplasmic reticulum and serves to target the protein to the cell surface. There, the glucosamine-inositol phospholipid moiety is cleaved off and the GPI-modified mannoprotein is covalently attached via its lipidless GPI glycan remnant to the 1,6-beta-glucan of the outer cell wall layer.

It localises to the cell membrane. It is found in the secreted. Its subcellular location is the cell wall. The enzyme catalyses Hydrolysis of (1-&gt;3)-beta-D-glucosidic linkages in (1-&gt;3)-beta-D-glucans.. Functionally, glucanases play a role in cell expansion during growth, in cell-cell fusion during mating, and in spore release during sporulation. This enzyme may be involved in beta-glucan degradation and also function biosynthetically as a transglycosylase. The polypeptide is Probable glucan endo-1,3-beta-glucosidase eglC (eglC) (Aspergillus fumigatus (strain CBS 144.89 / FGSC A1163 / CEA10) (Neosartorya fumigata)).